The following is a 223-amino-acid chain: Adenylate kinase 4, mitochondrial (223 aa).

15-20 (GSGKGT) lines the a ribonucleoside 5'-triphosphate pocket. Residues 35–64 (SSGHLLRENLKTGTEVGDVAKQYLEKGLLV) form an NMP region. Residues serine 36 and arginine 41 each contribute to the AMP site. Position 60 is an N6-succinyllysine (lysine 60). Residues 62 to 64 (LLV), 89 to 92 (GFPR), and glutamine 96 contribute to the AMP site. Residues 125 to 162 (RRWIHPSSGRVYNLDFNPPQVQGIDDITGEPLVQQEDD) are LID. Residues arginine 126 and 135–136 (VY) each bind a ribonucleoside 5'-triphosphate. Arginine 170 provides a ligand contact to AMP. Lysine 175 carries the post-translational modification N6-acetyllysine. 2 positions are modified to N6-acetyllysine; alternate: lysine 179 and lysine 186. N6-succinyllysine; alternate occurs at positions 179 and 186. Threonine 199 contributes to the a ribonucleoside 5'-triphosphate binding site.

The protein belongs to the adenylate kinase family. AK3 subfamily. Monomer. Interacts with SLC25A5/ANT2. As to expression, expressed in kidney, liver, stomach, brain, spinal cord, heart, ovary, oviduct, colon, jejunum, ileum and testis (at protein level). In the brain, expressed in the pyramidal cells of the cerebrum and glial cells in the cerebellum (at protein level). In the heart, expressed by myocytes (at protein level). In the kidney, expressed in the proximal to distal tubule in the cortex and the outer and inner zones of the medulla (at protein level). In the stomach, expressed in stratified squamous epithelia in the forestomach and in the gastric pit and mucus producing cells of the glandular stomach (at protein level). Expressed in epithelial cells of the jejunum, ileum, and colon (at protein level). In the testis, expressed by spermatocytes (at protein level). In the ovaries, expressed by oocytes, follicular epithelial cells, and corpus luteum cells (at protein level). In the oviduct, expressed in the epithelia of the isthmus and the ciliated cells of the ampulla (at protein level). Expressed in the pyramidal cells in the hippocampus.

It is found in the mitochondrion matrix. It carries out the reaction a ribonucleoside 5'-phosphate + ATP = a ribonucleoside 5'-diphosphate + ADP. The enzyme catalyses AMP + ATP = 2 ADP. It catalyses the reaction GTP + AMP = GDP + ADP. The catalysed reaction is CMP + ATP = CDP + ADP. It carries out the reaction GTP + CMP = CDP + GDP. The enzyme catalyses dAMP + ATP = dADP + ADP. It catalyses the reaction dCMP + ATP = dCDP + ADP. The catalysed reaction is a 2'-deoxyribonucleoside 5'-diphosphate + ATP = a 2'-deoxyribonucleoside 5'-triphosphate + ADP. It carries out the reaction a ribonucleoside 5'-diphosphate + ATP = a ribonucleoside 5'-triphosphate + ADP. The enzyme catalyses GDP + ATP = GTP + ADP. It catalyses the reaction CDP + GTP = CTP + GDP. The catalysed reaction is CDP + ATP = CTP + ADP. It carries out the reaction UDP + ATP = UTP + ADP. The enzyme catalyses GTP + UDP = UTP + GDP. It catalyses the reaction dADP + GTP = dATP + GDP. The catalysed reaction is dCDP + GTP = dCTP + GDP. It carries out the reaction dCDP + ATP = dCTP + ADP. The enzyme catalyses dGDP + ATP = dGTP + ADP. It catalyses the reaction dTDP + GTP = dTTP + GDP. The catalysed reaction is dTDP + ATP = dTTP + ADP. Functionally, broad-specificity mitochondrial nucleoside phosphate kinase involved in cellular nucleotide homeostasis by catalyzing nucleoside-phosphate interconversions. Similar to other adenylate kinases, preferentially catalyzes the phosphorylation of the nucleoside monophosphate AMP with ATP as phosphate donor to produce ADP. Phosphorylates only AMP when using GTP as phosphate donor. In vitro, can also catalyze the phosphorylation of CMP, dAMP and dCMP and use GTP as an alternate phosphate donor. Moreover, exhibits a diphosphate kinase activity, producing ATP, CTP, GTP, UTP, TTP, dATP, dCTP and dGTP from the corresponding diphosphate substrates with either ATP or GTP as phosphate donors. Plays a role in controlling cellular ATP levels by regulating phosphorylation and activation of the energy sensor protein kinase AMPK. Plays a protective role in the cellular response to oxidative stress. This chain is Adenylate kinase 4, mitochondrial, found in Mus musculus (Mouse).